Consider the following 282-residue polypeptide: Ubiquinone biosynthesis protein COQ4 homolog, mitochondrial (282 aa).

Residues 1–30 (MFVRKSCYSLINATRRCLRYRQLSSTTAGT) constitute a mitochondrion transit peptide. Zn(2+) contacts are provided by histidine 186, aspartate 187, histidine 190, and glutamate 202.

The protein belongs to the COQ4 family. Component of a multi-subunit COQ enzyme complex. Zn(2+) serves as cofactor.

It localises to the mitochondrion inner membrane. The enzyme catalyses a 4-hydroxy-3-methoxy-5-(all-trans-polyprenyl)benzoate + H(+) = a 2-methoxy-6-(all-trans-polyprenyl)phenol + CO2. It functions in the pathway cofactor biosynthesis; ubiquinone biosynthesis. Its function is as follows. Lyase that catalyzes the C1-decarboxylation of 4-hydroxy-3-methoxy-5-(all-trans-polyprenyl)benzoic acid into 2-methoxy-6-(all-trans-polyprenyl)phenol during ubiquinone biosynthesis. The protein is Ubiquinone biosynthesis protein COQ4 homolog, mitochondrial of Anopheles gambiae (African malaria mosquito).